A 156-amino-acid polypeptide reads, in one-letter code: Small ribosomal subunit protein uS7 (156 aa).

It belongs to the universal ribosomal protein uS7 family. As to quaternary structure, part of the 30S ribosomal subunit. Contacts proteins S9 and S11.

Its function is as follows. One of the primary rRNA binding proteins, it binds directly to 16S rRNA where it nucleates assembly of the head domain of the 30S subunit. Is located at the subunit interface close to the decoding center, probably blocks exit of the E-site tRNA. This Arthrospira platensis (Spirulina platensis) protein is Small ribosomal subunit protein uS7.